Here is a 276-residue protein sequence, read N- to C-terminus: Large ribosomal subunit protein uL2c (276 aa).

The disordered stretch occupies residues 225 to 276; it reads AMNPVDHPHGGGEGRTPIGRKKPVTPWGYSALGKKSRKRNRYSDASILRRRE.

The protein belongs to the universal ribosomal protein uL2 family. In terms of assembly, part of the 50S ribosomal subunit.

The protein resides in the plastid. The protein localises to the chloroplast. The sequence is that of Large ribosomal subunit protein uL2c (rpl2) from Pinus koraiensis (Korean pine).